The chain runs to 196 residues: Orotate phosphoribosyltransferase (196 aa).

5-phospho-alpha-D-ribose 1-diphosphate-binding positions include Arg102, Lys103, Lys106, His108, and 129-137; that span reads EDVVTTGGS. Residues Thr133 and Arg161 each contribute to the orotate site.

The protein belongs to the purine/pyrimidine phosphoribosyltransferase family. PyrE subfamily. In terms of assembly, homodimer. It depends on Mg(2+) as a cofactor.

It catalyses the reaction orotidine 5'-phosphate + diphosphate = orotate + 5-phospho-alpha-D-ribose 1-diphosphate. Its pathway is pyrimidine metabolism; UMP biosynthesis via de novo pathway; UMP from orotate: step 1/2. Catalyzes the transfer of a ribosyl phosphate group from 5-phosphoribose 1-diphosphate to orotate, leading to the formation of orotidine monophosphate (OMP). This Prochlorococcus marinus (strain MIT 9303) protein is Orotate phosphoribosyltransferase.